Consider the following 232-residue polypeptide: 5'-methylthioadenosine/S-adenosylhomocysteine nucleosidase (232 aa).

Glu12 (proton acceptor) is an active-site residue. Substrate is bound by residues Gly78, Ile152, and 173 to 174 (ME). Catalysis depends on Asp197, which acts as the Proton donor.

The protein belongs to the PNP/UDP phosphorylase family. MtnN subfamily. As to quaternary structure, homodimer.

The enzyme catalyses S-adenosyl-L-homocysteine + H2O = S-(5-deoxy-D-ribos-5-yl)-L-homocysteine + adenine. The catalysed reaction is S-methyl-5'-thioadenosine + H2O = 5-(methylsulfanyl)-D-ribose + adenine. It catalyses the reaction 5'-deoxyadenosine + H2O = 5-deoxy-D-ribose + adenine. It functions in the pathway amino-acid biosynthesis; L-methionine biosynthesis via salvage pathway; S-methyl-5-thio-alpha-D-ribose 1-phosphate from S-methyl-5'-thioadenosine (hydrolase route): step 1/2. Catalyzes the irreversible cleavage of the glycosidic bond in both 5'-methylthioadenosine (MTA) and S-adenosylhomocysteine (SAH/AdoHcy) to adenine and the corresponding thioribose, 5'-methylthioribose and S-ribosylhomocysteine, respectively. Also cleaves 5'-deoxyadenosine, a toxic by-product of radical S-adenosylmethionine (SAM) enzymes, into 5-deoxyribose and adenine. Thus, is required for in vivo function of the radical SAM enzymes biotin synthase and lipoic acid synthase, that are inhibited by 5'-deoxyadenosine accumulation. The polypeptide is 5'-methylthioadenosine/S-adenosylhomocysteine nucleosidase (Salmonella choleraesuis (strain SC-B67)).